Reading from the N-terminus, the 138-residue chain is Nucleoside diphosphate kinase (138 aa).

Lysine 11, phenylalanine 59, arginine 87, threonine 93, arginine 104, and asparagine 114 together coordinate ATP. Catalysis depends on histidine 117, which acts as the Pros-phosphohistidine intermediate.

Belongs to the NDK family. The cofactor is Mg(2+).

The protein resides in the cytoplasm. It catalyses the reaction a 2'-deoxyribonucleoside 5'-diphosphate + ATP = a 2'-deoxyribonucleoside 5'-triphosphate + ADP. The enzyme catalyses a ribonucleoside 5'-diphosphate + ATP = a ribonucleoside 5'-triphosphate + ADP. Its function is as follows. Major role in the synthesis of nucleoside triphosphates other than ATP. The ATP gamma phosphate is transferred to the NDP beta phosphate via a ping-pong mechanism, using a phosphorylated active-site intermediate. This chain is Nucleoside diphosphate kinase, found in Saccharolobus solfataricus (strain ATCC 35092 / DSM 1617 / JCM 11322 / P2) (Sulfolobus solfataricus).